Consider the following 416-residue polypeptide: Imidazolonepropionase (416 aa).

The Fe(3+) site is built by histidine 78 and histidine 80. Residues histidine 78 and histidine 80 each contribute to the Zn(2+) site. Arginine 87, tyrosine 150, and histidine 183 together coordinate 4-imidazolone-5-propanoate. Tyrosine 150 provides a ligand contact to N-formimidoyl-L-glutamate. Histidine 248 lines the Fe(3+) pocket. Histidine 248 is a binding site for Zn(2+). A 4-imidazolone-5-propanoate-binding site is contributed by glutamine 251. Position 323 (aspartate 323) interacts with Fe(3+). Aspartate 323 is a binding site for Zn(2+). Residues asparagine 325 and glycine 327 each contribute to the N-formimidoyl-L-glutamate site. Threonine 328 contributes to the 4-imidazolone-5-propanoate binding site.

Belongs to the metallo-dependent hydrolases superfamily. HutI family. Zn(2+) serves as cofactor. The cofactor is Fe(3+).

Its subcellular location is the cytoplasm. It carries out the reaction 4-imidazolone-5-propanoate + H2O = N-formimidoyl-L-glutamate. It participates in amino-acid degradation; L-histidine degradation into L-glutamate; N-formimidoyl-L-glutamate from L-histidine: step 3/3. Its function is as follows. Catalyzes the hydrolytic cleavage of the carbon-nitrogen bond in imidazolone-5-propanoate to yield N-formimidoyl-L-glutamate. It is the third step in the universal histidine degradation pathway. This Vibrio campbellii (strain ATCC BAA-1116) protein is Imidazolonepropionase.